A 208-amino-acid chain; its full sequence is Imidazoleglycerol-phosphate dehydratase (208 aa).

Belongs to the imidazoleglycerol-phosphate dehydratase family.

The protein localises to the cytoplasm. The catalysed reaction is D-erythro-1-(imidazol-4-yl)glycerol 3-phosphate = 3-(imidazol-4-yl)-2-oxopropyl phosphate + H2O. The protein operates within amino-acid biosynthesis; L-histidine biosynthesis; L-histidine from 5-phospho-alpha-D-ribose 1-diphosphate: step 6/9. This chain is Imidazoleglycerol-phosphate dehydratase, found in Mycobacterium sp. (strain JLS).